Reading from the N-terminus, the 427-residue chain is 3-phosphoshikimate 1-carboxyvinyltransferase (427 aa).

Lysine 21, serine 22, and arginine 26 together coordinate 3-phosphoshikimate. Lysine 21 provides a ligand contact to phosphoenolpyruvate. Glycine 93 and arginine 121 together coordinate phosphoenolpyruvate. 3-phosphoshikimate contacts are provided by serine 166, glutamine 168, aspartate 314, and lysine 341. Glutamine 168 provides a ligand contact to phosphoenolpyruvate. The active-site Proton acceptor is the aspartate 314. Residues arginine 345 and arginine 387 each coordinate phosphoenolpyruvate.

Belongs to the EPSP synthase family. In terms of assembly, monomer.

It localises to the cytoplasm. It catalyses the reaction 3-phosphoshikimate + phosphoenolpyruvate = 5-O-(1-carboxyvinyl)-3-phosphoshikimate + phosphate. It functions in the pathway metabolic intermediate biosynthesis; chorismate biosynthesis; chorismate from D-erythrose 4-phosphate and phosphoenolpyruvate: step 6/7. In terms of biological role, catalyzes the transfer of the enolpyruvyl moiety of phosphoenolpyruvate (PEP) to the 5-hydroxyl of shikimate-3-phosphate (S3P) to produce enolpyruvyl shikimate-3-phosphate and inorganic phosphate. In Alkaliphilus oremlandii (strain OhILAs) (Clostridium oremlandii (strain OhILAs)), this protein is 3-phosphoshikimate 1-carboxyvinyltransferase.